Reading from the N-terminus, the 238-residue chain is Sugar fermentation stimulation protein homolog (238 aa).

This sequence belongs to the SfsA family.

The protein is Sugar fermentation stimulation protein homolog of Pseudomonas entomophila (strain L48).